The sequence spans 461 residues: Alcaligin biosynthesis enzyme (461 aa).

9–15 is an FAD binding site; it reads VAIGIGP.

It belongs to the lysine N(6)-hydroxylase/L-ornithine N(5)-oxygenase family. Requires FAD as cofactor.

It participates in siderophore biosynthesis; alcaligin biosynthesis. This is Alcaligin biosynthesis enzyme (alcA) from Bordetella parapertussis (strain 12822 / ATCC BAA-587 / NCTC 13253).